A 365-amino-acid polypeptide reads, in one-letter code: MHIKDQLKQLKPYQPGKPIEEVKKEYQLDKIVKLASNENPFGCSTHAREAIQAELEHLAIYPDGYSASLRTELAEFLQVNEKQLIFGNGSDELVQIIARAFLDQHTNTVIPSPSFPQYRHNAIIEQAEIREVSLLDGGAHDLKGMLDEIDENTKVVWVCNPNNPTGNHLSESELVAFLDQVPAHVLVVLDEAYVEYVRAEDYPNSLSLLHSYQNVIVLRTFSKAYGLAALRVGYGIASEELITAIEPAREPFNTSRIAQAAARAAIKDQDFIQSCRQKNEAGLKQYQEFADRFGLFIYPSQTNFVLIDFKRDADELFHALLKKGYIVRSGKVLGFPTSLRITVGTMEQNAEILSTLADLLQGIRA.

Position 223 is an N6-(pyridoxal phosphate)lysine (Lys-223).

It belongs to the class-II pyridoxal-phosphate-dependent aminotransferase family. Histidinol-phosphate aminotransferase subfamily. In terms of assembly, homodimer. Pyridoxal 5'-phosphate is required as a cofactor.

The catalysed reaction is L-histidinol phosphate + 2-oxoglutarate = 3-(imidazol-4-yl)-2-oxopropyl phosphate + L-glutamate. Its pathway is amino-acid biosynthesis; L-histidine biosynthesis; L-histidine from 5-phospho-alpha-D-ribose 1-diphosphate: step 7/9. In Bacillus pumilus (strain SAFR-032), this protein is Histidinol-phosphate aminotransferase.